The chain runs to 148 residues: Lysozyme C, milk isozyme (148 aa).

The signal sequence occupies residues 1 to 18; that stretch reads MKALLIVGLLLLSVAVQG. One can recognise a C-type lysozyme domain in the interval 19-148; it reads KKFQRCELAR…LRSYVQGCRV (130 aa). Disulfide bonds link Cys24–Cys146, Cys48–Cys134, Cys83–Cys99, and Cys95–Cys113. Active-site residues include Glu53 and Asp71.

It belongs to the glycosyl hydrolase 22 family.

The enzyme catalyses Hydrolysis of (1-&gt;4)-beta-linkages between N-acetylmuramic acid and N-acetyl-D-glucosamine residues in a peptidoglycan and between N-acetyl-D-glucosamine residues in chitodextrins.. Functionally, lysozymes have primarily a bacteriolytic function; those in tissues and body fluids are associated with the monocyte-macrophage system and enhance the activity of immunoagents. This is Lysozyme C, milk isozyme from Bos taurus (Bovine).